The sequence spans 99 residues: Signal recognition particle 19 kDa protein (99 aa).

This sequence belongs to the SRP19 family. In terms of assembly, part of the signal recognition particle protein translocation system, which is composed of SRP and FtsY. Archaeal SRP consists of a 7S RNA molecule of 300 nucleotides and two protein subunits: SRP54 and SRP19.

It localises to the cytoplasm. Functionally, involved in targeting and insertion of nascent membrane proteins into the cytoplasmic membrane. Binds directly to 7S RNA and mediates binding of the 54 kDa subunit of the SRP. The protein is Signal recognition particle 19 kDa protein of Pyrococcus abyssi (strain GE5 / Orsay).